We begin with the raw amino-acid sequence, 305 residues long: Alpha-N-acetylgalactosaminide alpha-2,6-sialyltransferase 3 (305 aa).

The Cytoplasmic segment spans residues Met-1 to Lys-8. A helical; Signal-anchor for type II membrane protein membrane pass occupies residues Ser-9–Val-28. Topologically, residues Asn-29–Ser-305 are lumenal. A disulfide bridge links Cys-80 with Cys-229. Residues Asn-148, Asn-239, and Asn-301 are each glycosylated (N-linked (GlcNAc...) asparagine).

The protein belongs to the glycosyltransferase 29 family. In terms of tissue distribution, expressed in brain and kidney. Observed in the epithelium of the proximal tubules, marginal expression was also found in the distal tubules and collecting tubules.

It localises to the golgi apparatus membrane. It carries out the reaction an alpha-Neu5Ac-(2-&gt;3)-beta-D-Gal-(1-&gt;3)-D-GlcNAc derivative + CMP-N-acetyl-beta-neuraminate = an alpha-Neu5Ac-(2-&gt;3)-beta-D-Gal-(1-&gt;3)-[alpha-Neu5Ac-(2-&gt;6)]-D-GlcNAc derivative + CMP + H(+). It catalyses the reaction a ganglioside GM1b (d18:1(4E)) + CMP-N-acetyl-beta-neuraminate = a ganglioside GD1alpha (d18:1(4E)) + CMP + H(+). The enzyme catalyses a globoside MSGG + CMP-N-acetyl-beta-neuraminate = a globoside DSGG + CMP + H(+). The catalysed reaction is 3-O-[alpha-Neu5Ac-(2-&gt;3)-beta-D-Gal-(1-&gt;3)-alpha-D-GalNAc]-L-Ser-[protein] + CMP-N-acetyl-beta-neuraminate = a 3-O-{alpha-Neu5Ac-(2-&gt;3)-beta-D-Gal-(1-&gt;3)-[alpha-Neu5Ac-(2-&gt;6)]-alpha-D-GalNAc}-L-seryl-[protein] + CMP + H(+). It carries out the reaction 3-O-[alpha-Neu5Ac-(2-&gt;3)-beta-D-Gal-(1-&gt;3)-alpha-D-GalNAc]-L-Thr-[protein] + CMP-N-acetyl-beta-neuraminate = a 3-O-{alpha-Neu5Ac-(2-&gt;3)-beta-D-Gal-(1-&gt;3)-[alpha-Neu5Ac-(2-&gt;6)]-alpha-D-GalNAc}-L-threonyl-[protein] + CMP + H(+). Its pathway is protein modification; protein glycosylation. The protein operates within glycolipid biosynthesis. Transfers the sialyl group (N-acetyl-alpha-neuraminyl or NeuAc) from CMP-NeuAc to the GalNAc residue on the NeuAc-alpha-2,3-Gal-beta-1,3-GalNAc sequence of glycoproteins and glycolipids forming an alpha-2,6-linkage. Produces branched type disialyl structures by transfer of a sialyl group onto a GalNAc residue inside the backbone core chains. ST6GalNAcIII prefers glycolipids to glycoproteins, predominantly catalyzing the biosynthesis of ganglioside GD1alpha from GM1b. GD1alpha is a critical molecule in the communication and interaction between neuronal cells and their supportive cells, particularly in brain tissues, and functions as an adhesion molecule in the process of metastasis. Sialylation of glycoproteins or glycosphingolipids is very important in tumor development, neuronal development, nerve repair, immunological processes and regulation of hormone sensitivity. The sequence is that of Alpha-N-acetylgalactosaminide alpha-2,6-sialyltransferase 3 (ST6GALNAC3) from Homo sapiens (Human).